The chain runs to 134 residues: NADPH-dependent 7-cyano-7-deazaguanine reductase (134 aa).

Residue C48 is the Thioimide intermediate of the active site. The active-site Proton donor is the D55. Residues 70–72 (VEL) and 89–90 (QE) each bind substrate.

This sequence belongs to the GTP cyclohydrolase I family. QueF type 1 subfamily.

Its subcellular location is the cytoplasm. It carries out the reaction 7-aminomethyl-7-carbaguanine + 2 NADP(+) = 7-cyano-7-deazaguanine + 2 NADPH + 3 H(+). It functions in the pathway tRNA modification; tRNA-queuosine biosynthesis. Its function is as follows. Catalyzes the NADPH-dependent reduction of 7-cyano-7-deazaguanine (preQ0) to 7-aminomethyl-7-deazaguanine (preQ1). The protein is NADPH-dependent 7-cyano-7-deazaguanine reductase of Caldanaerobacter subterraneus subsp. tengcongensis (strain DSM 15242 / JCM 11007 / NBRC 100824 / MB4) (Thermoanaerobacter tengcongensis).